We begin with the raw amino-acid sequence, 97 residues long: Large ribosomal subunit protein uL23 (97 aa).

Belongs to the universal ribosomal protein uL23 family. Part of the 50S ribosomal subunit. Contacts protein L29, and trigger factor when it is bound to the ribosome.

Its function is as follows. One of the early assembly proteins it binds 23S rRNA. One of the proteins that surrounds the polypeptide exit tunnel on the outside of the ribosome. Forms the main docking site for trigger factor binding to the ribosome. In Bartonella henselae (strain ATCC 49882 / DSM 28221 / CCUG 30454 / Houston 1) (Rochalimaea henselae), this protein is Large ribosomal subunit protein uL23.